The chain runs to 123 residues: Small ribosomal subunit protein uS12cz/uS12cy (123 aa).

Belongs to the universal ribosomal protein uS12 family. As to quaternary structure, part of the 30S ribosomal subunit.

The protein localises to the plastid. Its subcellular location is the chloroplast. Its function is as follows. With S4 and S5 plays an important role in translational accuracy. Located at the interface of the 30S and 50S subunits. This Psilotum nudum (Whisk fern) protein is Small ribosomal subunit protein uS12cz/uS12cy (rps12-A).